The chain runs to 186 residues: ADP-ribosylation factor-like protein 6 (186 aa).

Glycine 2 is lipidated: N-myristoyl glycine. GTP-binding positions include 24-31, threonine 50, 69-73, glycine 72, 130-133, and alanine 164; these read GLDNSGKT, DMSGQ, and NKMD. 2 residues coordinate Mg(2+): threonine 31 and threonine 50.

It belongs to the small GTPase superfamily. Arf family. As to quaternary structure, interacts with SEC61B, ARL6IP1, ARL6IP2, ARL6IP3, ARL6IP4 ARL6IP5 and ARL6IP6. Interacts (GTP-bound form) with the BBSome a complex that contains BBS1, BBS2, BBS4, BBS5, BBS7, BBS8/TTC8, BBS9 and BBIP10. Interacts (GTP-free form) with IFT27.

Its subcellular location is the cell projection. It localises to the cilium membrane. The protein resides in the cytoplasm. The protein localises to the cytoskeleton. It is found in the cilium axoneme. Its subcellular location is the cilium basal body. Its function is as follows. Involved in membrane protein trafficking at the base of the ciliary organelle. Mediates recruitment onto plasma membrane of the BBSome complex which would constitute a coat complex required for sorting of specific membrane proteins to the primary cilia. Together with BBS1, is necessary for correct trafficking of PKD1 to primary cilia. Together with the BBSome complex and LTZL1, controls SMO ciliary trafficking and contributes to the sonic hedgehog (SHH) pathway regulation. May regulate cilia assembly and disassembly and subsequent ciliary signaling events such as the Wnt signaling cascade. Isoform 2 may be required for proper retinal function and organization. This chain is ADP-ribosylation factor-like protein 6 (ARL6), found in Homo sapiens (Human).